We begin with the raw amino-acid sequence, 354 residues long: Selenide, water dikinase (354 aa).

Cys-23 is a catalytic residue. Residues Lys-26 and 54–56 (TSD) each bind ATP. A Mg(2+)-binding site is contributed by Asp-57. Residues Asp-74, Asp-97, and 145–147 (GHS) contribute to the ATP site. Mg(2+) is bound at residue Asp-97. Asp-233 is a Mg(2+) binding site.

This sequence belongs to the selenophosphate synthase 1 family. Class I subfamily. In terms of assembly, homodimer. The cofactor is Mg(2+).

The catalysed reaction is hydrogenselenide + ATP + H2O = selenophosphate + AMP + phosphate + 2 H(+). Synthesizes selenophosphate from selenide and ATP. This Burkholderia ambifaria (strain MC40-6) protein is Selenide, water dikinase.